The sequence spans 188 residues: Acireductone dioxygenase (188 aa).

Fe(2+) is bound by residues His97, His99, Glu103, and His141. His97, His99, Glu103, and His141 together coordinate Ni(2+).

It belongs to the acireductone dioxygenase (ARD) family. As to quaternary structure, monomer. Requires Fe(2+) as cofactor. It depends on Ni(2+) as a cofactor.

It carries out the reaction 1,2-dihydroxy-5-(methylsulfanyl)pent-1-en-3-one + O2 = 3-(methylsulfanyl)propanoate + CO + formate + 2 H(+). The enzyme catalyses 1,2-dihydroxy-5-(methylsulfanyl)pent-1-en-3-one + O2 = 4-methylsulfanyl-2-oxobutanoate + formate + 2 H(+). Its pathway is amino-acid biosynthesis; L-methionine biosynthesis via salvage pathway; L-methionine from S-methyl-5-thio-alpha-D-ribose 1-phosphate: step 5/6. Its function is as follows. Catalyzes 2 different reactions between oxygen and the acireductone 1,2-dihydroxy-3-keto-5-methylthiopentene (DHK-MTPene) depending upon the metal bound in the active site. Fe-containing acireductone dioxygenase (Fe-ARD) produces formate and 2-keto-4-methylthiobutyrate (KMTB), the alpha-ketoacid precursor of methionine in the methionine recycle pathway. Ni-containing acireductone dioxygenase (Ni-ARD) produces methylthiopropionate, carbon monoxide and formate, and does not lie on the methionine recycle pathway. This Xylella fastidiosa (strain M12) protein is Acireductone dioxygenase.